An 81-amino-acid polypeptide reads, in one-letter code: Omega-conotoxin-like TxO4 (81 aa).

The first 22 residues, 1–22, serve as a signal peptide directing secretion; the sequence is MKLTCVVIVAVLFLTAWTFVTA. Positions 23-52 are excised as a propeptide; that stretch reads VPHSSNALENLYLKARHEMENPEASKLNTR. Disulfide bonds link Cys55-Cys72, Cys62-Cys76, and Cys71-Cys80. Pro70 carries the post-translational modification 4-hydroxyproline; partial. The residue at position 75 (Trp75) is a 6'-bromotryptophan; partial.

It belongs to the conotoxin O1 superfamily. In terms of processing, txO4 is found with and without hydroxyproline and these two forms have a bromotryptophan. Truncated TxO4 is found with and without bromotryptophan, and these two forms have no hydroxyproline. Expressed by the venom duct.

It is found in the secreted. Functionally, omega-conotoxins act at presynaptic membranes, they bind and block voltage-gated calcium channels (Cav). This Conus textile (Cloth-of-gold cone) protein is Omega-conotoxin-like TxO4.